The chain runs to 158 residues: Succinate dehydrogenase assembly factor 2, mitochondrial (158 aa).

The transit peptide at 1–23 (MLRQLLATARRLLLPLATPKRCL) directs the protein to the mitochondrion.

Belongs to the SDHAF2 family. In terms of assembly, interacts with the flavoprotein subunit within the SDH catalytic dimer.

Its subcellular location is the mitochondrion matrix. In terms of biological role, plays an essential role in the assembly of succinate dehydrogenase (SDH), an enzyme complex (also referred to as respiratory complex II) that is a component of both the tricarboxylic acid (TCA) cycle and the mitochondrial electron transport chain, and which couples the oxidation of succinate to fumarate with the reduction of ubiquinone (coenzyme Q) to ubiquinol. Required for flavinylation (covalent attachment of FAD) of the flavoprotein subunit of the SDH catalytic dimer. This chain is Succinate dehydrogenase assembly factor 2, mitochondrial, found in Drosophila virilis (Fruit fly).